Here is a 165-residue protein sequence, read N- to C-terminus: Phosphopantetheine adenylyltransferase (165 aa).

Ser-10 contacts substrate. ATP contacts are provided by residues 10-11 (SF) and His-18. Lys-42, Thr-79, and Arg-93 together coordinate substrate. ATP contacts are provided by residues 94-96 (GLR), Glu-104, and 129-135 (VRPITAT).

The protein belongs to the bacterial CoaD family. In terms of assembly, homohexamer. The cofactor is Mg(2+).

Its subcellular location is the cytoplasm. It carries out the reaction (R)-4'-phosphopantetheine + ATP + H(+) = 3'-dephospho-CoA + diphosphate. It functions in the pathway cofactor biosynthesis; coenzyme A biosynthesis; CoA from (R)-pantothenate: step 4/5. Reversibly transfers an adenylyl group from ATP to 4'-phosphopantetheine, yielding dephospho-CoA (dPCoA) and pyrophosphate. The protein is Phosphopantetheine adenylyltransferase of Rhodopseudomonas palustris (strain BisA53).